Consider the following 829-residue polypeptide: Transcription activator GutR (829 aa).

Residues isoleucine 42 to glycine 61 constitute a DNA-binding region (H-T-H motif). Glycine 200–threonine 207 lines the ATP pocket. 3 TPR repeats span residues histidine 697 to tyrosine 730, isoleucine 736 to alanine 769, and isoleucine 775 to tryptophan 808.

Its function is as follows. Activator of the glucitol dehydrogenase gene (gutB). This Bacillus subtilis (strain 168) protein is Transcription activator GutR (gutR).